Here is a 932-residue protein sequence, read N- to C-terminus: 2-oxoglutarate dehydrogenase E1 component (932 aa).

This sequence belongs to the alpha-ketoglutarate dehydrogenase family. In terms of assembly, homodimer. Part of the 2-oxoglutarate dehydrogenase (OGDH) complex composed of E1 (2-oxoglutarate dehydrogenase), E2 (dihydrolipoamide succinyltransferase) and E3 (dihydrolipoamide dehydrogenase); the complex contains multiple copies of the three enzymatic components (E1, E2 and E3). Thiamine diphosphate is required as a cofactor.

It catalyses the reaction N(6)-[(R)-lipoyl]-L-lysyl-[protein] + 2-oxoglutarate + H(+) = N(6)-[(R)-S(8)-succinyldihydrolipoyl]-L-lysyl-[protein] + CO2. E1 component of the 2-oxoglutarate dehydrogenase (OGDH) complex which catalyzes the decarboxylation of 2-oxoglutarate, the first step in the conversion of 2-oxoglutarate to succinyl-CoA and CO(2). This Staphylococcus aureus (strain MRSA252) protein is 2-oxoglutarate dehydrogenase E1 component.